A 440-amino-acid polypeptide reads, in one-letter code: Trigger factor (440 aa).

The 86-residue stretch at 163-248 folds into the PPIase FKBP-type domain; the sequence is GDTVVIDFKG…VHEVKTKELP (86 aa).

Belongs to the FKBP-type PPIase family. Tig subfamily.

It is found in the cytoplasm. The enzyme catalyses [protein]-peptidylproline (omega=180) = [protein]-peptidylproline (omega=0). Its function is as follows. Involved in protein export. Acts as a chaperone by maintaining the newly synthesized protein in an open conformation. Functions as a peptidyl-prolyl cis-trans isomerase. This Lactiplantibacillus plantarum (strain ATCC BAA-793 / NCIMB 8826 / WCFS1) (Lactobacillus plantarum) protein is Trigger factor.